The chain runs to 532 residues: Pentatricopeptide repeat-containing protein At4g02820, mitochondrial (532 aa).

A mitochondrion-targeting transit peptide spans 1–28 (MNKNMLVRSARPTLASIHRLFSAAAAAT). The segment at 35-56 (PVVKPRSGGGKGGESANKKETV) is disordered. PPR repeat units follow at residues 161–195 (GHAA…GFLK), 196–226 (SCLP…LKIR), 230–264 (DIVT…KLNP), 265–295 (DWVT…MEKL), 300–330 (NRVA…VKSS), 335–365 (NDAE…WESV), 370–404 (DARI…GINP), 405–435 (SYST…AIDS), 442–472 (NVRL…LQKA), and 476–512 (NTQL…DEET).

This sequence belongs to the PPR family. P subfamily.

It localises to the mitochondrion. This Arabidopsis thaliana (Mouse-ear cress) protein is Pentatricopeptide repeat-containing protein At4g02820, mitochondrial.